Reading from the N-terminus, the 370-residue chain is tRNA-specific 2-thiouridylase MnmA (370 aa).

ATP is bound by residues G11–S18 and M37. The interval N97 to D99 is interaction with target base in tRNA. C102 serves as the catalytic Nucleophile. Residues C102 and C199 are joined by a disulfide bond. Residue G126 coordinates ATP. Positions K149–Q151 are interaction with tRNA. The active-site Cysteine persulfide intermediate is the C199. The interval R307–Y308 is interaction with tRNA.

It belongs to the MnmA/TRMU family.

Its subcellular location is the cytoplasm. It catalyses the reaction S-sulfanyl-L-cysteinyl-[protein] + uridine(34) in tRNA + AH2 + ATP = 2-thiouridine(34) in tRNA + L-cysteinyl-[protein] + A + AMP + diphosphate + H(+). Catalyzes the 2-thiolation of uridine at the wobble position (U34) of tRNA, leading to the formation of s(2)U34. This is tRNA-specific 2-thiouridylase MnmA from Staphylococcus haemolyticus (strain JCSC1435).